A 101-amino-acid polypeptide reads, in one-letter code: Putative defensin-like protein 307 (101 aa).

The first 22 residues, 1–22 (MEKSALIFIGILLFSTCTSIMA), serve as a signal peptide directing secretion. 3 disulfides stabilise this stretch: Cys-29–Cys-49, Cys-35–Cys-54, and Cys-40–Cys-56.

Belongs to the DEFL family.

The protein localises to the secreted. The chain is Putative defensin-like protein 307 from Arabidopsis thaliana (Mouse-ear cress).